Consider the following 423-residue polypeptide: Glutamate-1-semialdehyde 2,1-aminomutase (423 aa).

Lysine 259 bears the N6-(pyridoxal phosphate)lysine mark.

The protein belongs to the class-III pyridoxal-phosphate-dependent aminotransferase family. HemL subfamily. In terms of assembly, homodimer. The cofactor is pyridoxal 5'-phosphate.

It is found in the cytoplasm. It carries out the reaction (S)-4-amino-5-oxopentanoate = 5-aminolevulinate. Its pathway is porphyrin-containing compound metabolism; protoporphyrin-IX biosynthesis; 5-aminolevulinate from L-glutamyl-tRNA(Glu): step 2/2. This is Glutamate-1-semialdehyde 2,1-aminomutase from Thermosipho melanesiensis (strain DSM 12029 / CIP 104789 / BI429).